A 422-amino-acid polypeptide reads, in one-letter code: Synaptotagmin-1 (422 aa).

The Vesicular segment spans residues 1-57 (MVSESHHEALAAPPVTTVATVLPSNATEPASPGEGKEDAFSKLKEKFMNELHKIPLP). Residue asparagine 25 is glycosylated (N-linked (GlcNAc...) asparagine). Residues 58–80 (PWALIAIAIVAVLLVLTCCFCIC) form a helical membrane-spanning segment. S-palmitoyl cysteine attachment occurs at residues cysteine 75, cysteine 76, cysteine 78, cysteine 80, and cysteine 83. Residues 81-422 (KKCLFKKKNK…EVDAMLAVKK (342 aa)) lie on the Cytoplasmic side of the membrane. Residues 113-142 (TMKDQALKDDDAETGLTDGEEKEEPKEEEK) form a disordered region. Positions 122 to 134 (DDAETGLTDGEEK) are enriched in acidic residues. Threonine 129 is subject to Phosphothreonine. The tract at residues 136 to 382 (EPKEEEKLGK…AIGKVFVGYN (247 aa)) is phospholipid binding. Residues 142–261 (KLGKLQYSLD…DFGHVTEEWR (120 aa)) form the C2 1 domain. Ca(2+) contacts are provided by leucine 172, aspartate 173, and aspartate 179. Residue tyrosine 230 is modified to Phosphotyrosine. Ca(2+)-binding residues include aspartate 231, phenylalanine 232, aspartate 233, serine 236, lysine 237, and aspartate 239. Serine 265 bears the Phosphoserine mark. Residues 273–406 (KLGDICFSLR…NPRRPIAQWH (134 aa)) enclose the C2 2 domain. Ca(2+) contacts are provided by aspartate 304 and aspartate 310. Phosphoserine occurs at positions 343 and 345. The Ca(2+) site is built by aspartate 364, aspartate 366, and aspartate 372.

Belongs to the synaptotagmin family. In terms of assembly, homotetramer. Heterodimer; heterodimerizes with SYT2 in presence of calcium. Interacts with SCAMP5. Interacts with STON2. Forms a complex with SV2B, syntaxin 1 and SNAP25. Interacts with SV2A, SV2B and SV2C. Interacts with RIMS1. Interacts with PRRT2. Interacts with DNAJC5 in a phosphorylation-dependent manner. Interacts (via N-terminus) with RAB3A. Interacts with SYT12. Interacts with calmodulin. Interacts with DNM1 (via C-terminal proline-rich domain (PRD)); this interaction facilitates vesicle fission during clathrin-mediated endocytosis (CME). Ca(2+) is required as a cofactor. Glycosylated. Expressed in melanocytes.

It localises to the cytoplasmic vesicle. It is found in the secretory vesicle membrane. The protein resides in the secretory vesicle. Its subcellular location is the synaptic vesicle membrane. The protein localises to the chromaffin granule membrane. It localises to the cytoplasm. Functionally, calcium sensor that participates in triggering neurotransmitter release at the synapse. May have a regulatory role in the membrane interactions during trafficking of synaptic vesicles at the active zone of the synapse. It binds acidic phospholipids with a specificity that requires the presence of both an acidic head group and a diacyl backbone. A Ca(2+)-dependent interaction between synaptotagmin and putative receptors for activated protein kinase C has also been reported. It can bind to at least three additional proteins in a Ca(2+)-independent manner; these are neurexins, syntaxin and AP2. Plays a role in dendrite formation by melanocytes. The chain is Synaptotagmin-1 from Homo sapiens (Human).